A 169-amino-acid chain; its full sequence is Cell division inhibitor SulA (169 aa).

A compositionally biased stretch (polar residues) spans 1–13 (MFTSAHANRSAQA). The disordered stretch occupies residues 1 to 26 (MFTSAHANRSAQASAPAGHYAHRSGE). Residues 106–112 (ALRTGNY) are ftsZ binding. Positions 162-169 (KIHSNLYH) are lon protease binding.

This sequence belongs to the SulA family. As to quaternary structure, interacts with FtsZ. In terms of processing, is rapidly cleaved and degraded by the Lon protease once DNA damage is repaired.

Component of the SOS system and an inhibitor of cell division. Accumulation of SulA causes rapid cessation of cell division and the appearance of long, non-septate filaments. In the presence of GTP, binds a polymerization-competent form of FtsZ in a 1:1 ratio, thus inhibiting FtsZ polymerization and therefore preventing it from participating in the assembly of the Z ring. This mechanism prevents the premature segregation of damaged DNA to daughter cells during cell division. The protein is Cell division inhibitor SulA of Klebsiella pneumoniae subsp. pneumoniae (strain ATCC 700721 / MGH 78578).